Here is a 318-residue protein sequence, read N- to C-terminus: Potassium channel subfamily K member 15 (318 aa).

Over 1–8 (MRKQSART) the chain is Cytoplasmic. Residues 9 to 29 (AALILCILSYLLVGAAVFDAL) form a helical membrane-spanning segment. The segment at residues 80 to 101 (FAGSFYFAITVITTIGYGHAAP) is an intramembrane region (pore-forming). The helical transmembrane segment at 108–128 (VFCMFYALLGIPLTLVTFQSL) threads the bilayer. Residues 129–158 (GERLNALVRCLLLAAKRCLGLRRPHVSAEN) are Cytoplasmic-facing. Residues 159-179 (MVVAGLLLCAATLALGAAAFA) traverse the membrane as a helical segment. An intramembrane region (pore-forming) is located at residues 189–209 (AYYYCFITLTTIGFGDFVALQ). A helical transmembrane segment spans residues 223 to 243 (FSFLYILLGLTVIGAFLNLVV). Over 244-318 (LRFLASAEAP…DRLRARRKSI (75 aa)) the chain is Cytoplasmic. Residues 296-318 (LSPEAVHDCHSSPDRLRARRKSI) are disordered. Residues 300-311 (AVHDCHSSPDRL) are compositionally biased toward basic and acidic residues.

It belongs to the two pore domain potassium channel (TC 1.A.1.8) family. Heterodimer. Phosphorylated. As to expression, brain-specific. Highly expressed in auditory nuclei, in Purkinje cells and in olfactory bulb mitral cells.

The protein localises to the membrane. In terms of biological role, probable potassium channel subunit. No channel activity observed in heterologous systems. May need to associate with another protein to form a functional channel. The protein is Potassium channel subfamily K member 15 (Kcnk15) of Rattus norvegicus (Rat).